The sequence spans 561 residues: AT-rich interactive domain-containing protein 3B (561 aa).

Position 1 is an N-acetylmethionine (Met1). A compositionally biased stretch (low complexity) spans 1–17 (MEPLQQQQQQQQQQQKQ). 3 disordered regions span residues 1-36 (MEPLQQQQQQQQQQQKQPHLAPLQMDAREKQGQQMR), 53-122 (LSAT…SKYF), and 136-179 (PMSN…WNLD). Ser89 is subject to Phosphoserine. The segment covering 90 to 109 (EPEEEDGGLEDEDGDDEVAE) has biased composition (acidic residues). Over residues 152–162 (QAKEDHTKDAS) the composition is skewed to basic and acidic residues. A compositionally biased stretch (polar residues) spans 164-178 (ASPSVSTAGQPNWNL). Ser165 carries the post-translational modification Phosphoserine. The interaction with RB1 stretch occupies residues 203–365 (SRDFAKLYEL…SPPKIRFPIL (163 aa)). The 93-residue stretch at 215–307 (DPERKEFLDD…YLYAYECEKK (93 aa)) folds into the ARID domain. Ser311 carries the phosphoserine modification. Arg361 carries the post-translational modification Asymmetric dimethylarginine. The segment at 370–397 (SSGTNTSSPRISPATTLRKGDGAPVTTV) is disordered. In terms of domain architecture, REKLES spans 419–517 (AALEQLRERL…GVLFAQKPVV (99 aa)). Positions 490–513 (SSIGSINMSVDIDGTTYAGVLFAQ) are interaction with ARID3A. Positions 523–552 (SAPQSLGSSASSSSSSHCSPSPTSSRGTPS) are enriched in low complexity. Positions 523-561 (SAPQSLGSSASSSSSSHCSPSPTSSRGTPSAEPSTSWSL) are disordered.

In terms of assembly, heterodimer with ARID3A. Interacts with unphosphorylated RB1. In terms of tissue distribution, expressed in placenta, testis and leukocytes. Expressed in neuroblastoma. Present in K-562 erythrocytic leukemia cell line (at protein level).

It is found in the nucleus. Its function is as follows. Transcription factor which may be involved in neuroblastoma growth and malignant transformation. Favors nuclear targeting of ARID3A. In Homo sapiens (Human), this protein is AT-rich interactive domain-containing protein 3B (ARID3B).